Consider the following 165-residue polypeptide: Putative tyrosine-protein phosphatase AMV078 (165 aa).

The Tyrosine-protein phosphatase domain occupies 2–149 (NISNINNDIY…LKFYNSYKNI (148 aa)). Cysteine 94 serves as the catalytic Phosphocysteine intermediate.

It belongs to the protein-tyrosine phosphatase family. Non-receptor class dual specificity subfamily.

The catalysed reaction is O-phospho-L-tyrosyl-[protein] + H2O = L-tyrosyl-[protein] + phosphate. This is Putative tyrosine-protein phosphatase AMV078 from Amsacta moorei entomopoxvirus (AmEPV).